A 481-amino-acid polypeptide reads, in one-letter code: CUGBP Elav-like family member 6 (481 aa).

The segment covering 1 to 12 has biased composition (low complexity); the sequence is MAAAPGGSAQPA. The disordered stretch occupies residues 1 to 34; sequence MAAAPGGSAQPAGPGPRLGFSTADSGVGMSGLNP. 3 consecutive RRM domains span residues 46–127, 134–214, and 396–474; these read IKLF…PAAS, RKLF…LADT, and CNLF…LKRP.

The protein belongs to the CELF/BRUNOL family. In terms of tissue distribution, expressed mainly in kidney, brain and testis and present in other tissues albeit at lower levels. Also expressed in fetal kidney.

Its subcellular location is the nucleus. It is found in the cytoplasm. In terms of biological role, RNA-binding protein implicated in the regulation of pre-mRNA alternative splicing. Mediates exon inclusion and/or exclusion in pre-mRNA that are subject to tissue-specific and developmentally regulated alternative splicing. Specifically activates exon 5 inclusion of TNNT2 in a muscle-specific splicing enhancer (MSE)-dependent manner. Promotes also exon exclusion of INSR pre-mRNA. The polypeptide is CUGBP Elav-like family member 6 (CELF6) (Homo sapiens (Human)).